Reading from the N-terminus, the 131-residue chain is Small nuclear ribonucleoprotein SmD3b (131 aa).

Positions 7 to 79 constitute a Sm domain; it reads IPVKLLHEAS…VRFMVIPDIL (73 aa). Residues 96–131 are disordered; that stretch reads SSSLGVGRGRGAMRGKPAAGPGRGTGGRGAVPPVRR.

This sequence belongs to the snRNP core protein family. In terms of tissue distribution, expressed in young seedlings, roots, leaves, flowers and immature siliques.

The protein resides in the cytoplasm. It is found in the cytosol. Its subcellular location is the nucleus. Functionally, core component of the spliceosomal U1, U2, U4 and U5 small nuclear ribonucleoproteins (snRNPs), the building blocks of the spliceosome. May play a major role in the splicing of cellular pre-mRNAs. Required for normal plant development. In Arabidopsis thaliana (Mouse-ear cress), this protein is Small nuclear ribonucleoprotein SmD3b.